The primary structure comprises 542 residues: CTP synthase (542 aa).

The amidoligase domain stretch occupies residues 1–265 (MTRFIFITGG…DTQVLKFFGM (265 aa)). Serine 13 is a CTP binding site. Serine 13 is a binding site for UTP. An ATP-binding site is contributed by 14 to 19 (SLGKGL). Tyrosine 54 serves as a coordination point for L-glutamine. Aspartate 71 contacts ATP. Mg(2+) is bound by residues aspartate 71 and glutamate 139. CTP is bound by residues 146–148 (DIE), 186–191 (KTKPTQ), and lysine 222. UTP contacts are provided by residues 186–191 (KTKPTQ) and lysine 222. A Glutamine amidotransferase type-1 domain is found at 291–541 (TIAVVGKYTS…IRAAIEQSRL (251 aa)). Glycine 353 lines the L-glutamine pocket. Catalysis depends on cysteine 380, which acts as the Nucleophile; for glutamine hydrolysis. Residues 381–384 (FGMQ), glutamate 404, and arginine 469 contribute to the L-glutamine site. Catalysis depends on residues histidine 514 and glutamate 516.

It belongs to the CTP synthase family. Homotetramer.

It catalyses the reaction UTP + L-glutamine + ATP + H2O = CTP + L-glutamate + ADP + phosphate + 2 H(+). The enzyme catalyses L-glutamine + H2O = L-glutamate + NH4(+). The catalysed reaction is UTP + NH4(+) + ATP = CTP + ADP + phosphate + 2 H(+). It functions in the pathway pyrimidine metabolism; CTP biosynthesis via de novo pathway; CTP from UDP: step 2/2. Allosterically activated by GTP, when glutamine is the substrate; GTP has no effect on the reaction when ammonia is the substrate. The allosteric effector GTP functions by stabilizing the protein conformation that binds the tetrahedral intermediate(s) formed during glutamine hydrolysis. Inhibited by the product CTP, via allosteric rather than competitive inhibition. In terms of biological role, catalyzes the ATP-dependent amination of UTP to CTP with either L-glutamine or ammonia as the source of nitrogen. Regulates intracellular CTP levels through interactions with the four ribonucleotide triphosphates. This chain is CTP synthase, found in Rhodospirillum centenum (strain ATCC 51521 / SW).